A 522-amino-acid chain; its full sequence is MSLLNCENSCGSSQSESDCCVAMASSCSAATKDDSVGGTASTGNLSSSFMEEIQGYDVEFDPPLESKYECPICLMALREAVQTPCGHRFCKACIIKSIRDAGHKCPVDNEILLENQLFPDNFAKREILSLMVKCPNEGCLHKMELRHLEDHQAHCEFALVDCPQCQRPFQKFHINIHILKDCPRRQVSCDNCAALVAFEDKEIHDQNCPLANVICEYCNTILIREQMPNHYDLDCPTAPIPCTFSTFGCHEKMQRNHLARHLQENTQSHMRMLAQAVHSLSLIPDSGYVSEVRNFQETIHQLEGRLVRQDHQIRELTAKMETQSTYVSELKRTIRTLEDKVAEIEAQQCNGIYIWKIGNFGMHLKCQEEEKPVVIHSPGFYTGKPGYKLCMRLHLQLPTAQRCANYISLFVHTMQGEYDSHLPWPFQGTIRLTILDQSEAPVRQNHEEIMDAKPDLLAFQRPTIPRNPKGFGYVTFMHLEALRQRTFIKDDTLLVRCEVSTRFDMGSLRREGFQPRSTDSGV.

Residues 1-354 (MSLLNCENSC…EAQQCNGIYI (354 aa)) are interaction with TAX1BP1. The segment at 70–109 (CPICLMALREAVQTPCGHRFCKACIIKSIRDAGHKCPVDN) adopts an RING-type; degenerate zinc-finger fold. A Glycyl lysine isopeptide (Lys-Gly) (interchain with G-Cter in SUMO); alternate cross-link involves residue K124. K124 is covalently cross-linked (Glycyl lysine isopeptide (Lys-Gly) (interchain with G-Cter in ubiquitin); alternate). K142 is covalently cross-linked (Glycyl lysine isopeptide (Lys-Gly) (interchain with G-Cter in SUMO)). TRAF-type zinc fingers lie at residues 150-202 (DHQA…EDKE) and 203-259 (IHDQ…NHLA). Positions 288-348 (YVSEVRNFQE…DKVAEIEAQQ (61 aa)) form a coiled coil. A Glycyl lysine isopeptide (Lys-Gly) (interchain with G-Cter in ubiquitin) cross-link involves residue K319. Residues 350–499 (NGIYIWKIGN…DDTLLVRCEV (150 aa)) form the MATH domain. The segment at 355–522 (WKIGNFGMHL…FQPRSTDSGV (168 aa)) is interaction with TANK. Residue K453 forms a Glycyl lysine isopeptide (Lys-Gly) (interchain with G-Cter in SUMO) linkage.

This sequence belongs to the TNF receptor-associated factor family. A subfamily. As to quaternary structure, homotrimer. Homooligomer. N-terminal region is dimeric while C-terminal region is trimeric; maybe providing a mode of oligomerization. Upon IL1B treatment, forms a complex with PELI1, IRAK1, IRAK4 and MYD88; this complex recruits MAP3K7/TAK1, TAB1 and TAB2 to mediate NF-kappa-B activation. Direct binding of SMAD6 to PELI1 prevents the complex formation and hence negatively regulates IL1R-TLR signaling and eventually NF-kappa-B-mediated gene expression. Binds to TNFRSF5/CD40 and TNFRSF11A/RANK. Associates with NGFR, TNFRSF17, IRAK2, IRAK3, RIPK2, MAP3K1, MAP3K5, MAP3K14, CSK, TRAF, TRAF-interacting protein TRIP and TNF receptor associated protein TDP2. Interacts with IL17R. Interacts with SQSTM1 bridging NTRK1 and NGFR. Forms a ternary complex with SQSTM1 and PRKCZ. Interacts with PELI2 and PELI3. Binds UBE2V1. Interacts with TAX1BP1; this interaction mediates deubiquitination of TRAF6 and inhibition of NF-kappa-B activation. Interacts with ZNF675. Interacts with ARRB1 and ARRB2. Interacts with MAP3K7 and TAB1/MAP3K7IP1; during IL-1 signaling. Interacts with UBE2N. Interacts with TGFBR1, HDAC1 and RANGAP1. Interacts with AKT1, AKT2 and AKT3. Interacts (via TRAF domains) with NUMBL (via C-terminal). Interacts with RBCK1. Interacts with LIMD1 (via LIM domains). Interacts with RSAD2/viperin. Interacts (via C-terminus) with EIF2AK2/PKR (via the kinase catalytic domain). Interacts with ZFAND5. Interacts with IL1RL1. Interacts with TRAFD1. Interacts with AJUBA. Interacts with MAVS/IPS1. Interacts (via TRAF domains) with DYNC2I2 (via WD domains). Interacts with IFIT3 (via N-terminus). Interacts with TICAM2. Interacts with CARD14. Interacts with CD40 and MAP3K8; the interaction is required for ERK activation. Interacts with TICAM1 and this interaction is enhanced in the presence of WDFY1. Interacts with TANK; this interaction increases in response to DNA damage. Interacts with USP10; this interaction increases in response to DNA damage. Interacts with ZC3H12A; this interaction increases in response to DNA damage and is stimulated by TANK. Interacts with WDFY3. Interacts with TRIM13. Interacts with GPS2. Interacts (via C-terminus) with SASH1. Interacts with LRRC19. Interacts with IL17RA and TRAF3IP2. Interacts with TOMM70. Interacts with AMBRA1; interaction is required to mediate 'Lys-63'-linked ubiquitination of ULK1. Interacts with CRBN; this interaction inhibits TLR4-mediated signaling by preventing TRAF6-mediated ubiquitination of ECSIT. In terms of processing, sumoylated on Lys-124, Lys-142 and Lys-453 with SUMO1. Polyubiquitinated on Lys-124 by TRAF3IP2; after cell stimulation with IL17A. Polyubiquitinated on Lys-124; after cell stimulation with IL1B or TGFB. This ligand-induced cell stimulation leads to dimerization/oligomerization of TRAF6 molecules, followed by auto-ubiquitination which involves UBE2N and UBE2V1 and leads to TRAF6 activation. This 'Lys-63' site-specific poly-ubiquitination appears to be associated with the activation of signaling molecules. Deubiquitinated by USP10 in a TANK-dependent manner, leading to the negative regulation of NF-kappa-B signaling upon DNA damage. LRRC19 induces 'Lys-63' ubiquitination. Ubiquitinated at Lys-319 by the SCF(FBXL2) complex, leading to its degradation by the proteasome.

The protein resides in the cytoplasm. It localises to the cell cortex. Its subcellular location is the nucleus. The protein localises to the lipid droplet. The enzyme catalyses S-ubiquitinyl-[E2 ubiquitin-conjugating enzyme]-L-cysteine + [acceptor protein]-L-lysine = [E2 ubiquitin-conjugating enzyme]-L-cysteine + N(6)-ubiquitinyl-[acceptor protein]-L-lysine.. Its pathway is protein modification; protein ubiquitination. Functionally, E3 ubiquitin ligase that, together with UBE2N and UBE2V1, mediates the synthesis of 'Lys-63'-linked-polyubiquitin chains conjugated to proteins, such as ECSIT, IKBKG, IRAK1, AKT1 and AKT2. Also mediates ubiquitination of free/unanchored polyubiquitin chain that leads to MAP3K7 activation. Leads to the activation of NF-kappa-B and JUN. Seems to also play a role in dendritic cells (DCs) maturation and/or activation. Represses c-Myb-mediated transactivation, in B-lymphocytes. Adapter protein that seems to play a role in signal transduction initiated via TNF receptor, IL-1 receptor and IL-17 receptor. Regulates osteoclast differentiation by mediating the activation of adapter protein complex 1 (AP-1) and NF-kappa-B, in response to RANK-L stimulation. Together with MAP3K8, mediates CD40 signals that activate ERK in B-cells and macrophages, and thus may play a role in the regulation of immunoglobulin production. Acts as a regulator of the JNK and NF-kappa-B signaling pathways by initiating assembly of heterotypic 'Lys-63'-/'Lys-48'-linked branched ubiquitin chains that are then recognized by TAB2: TRAF6 catalyzes initial 'Lys-63'-linked-polyubiquitin chains that are then branched via 'Lys-48'-linked polyubiquitin by HUWE1. 'Lys-63'-/'Lys-48'-linked branched ubiquitin chains protect 'Lys-63'-linkages from CYLD deubiquitination. Also participates in the TCR signaling by ubiquitinating LAT. The protein is TNF receptor-associated factor 6 (TRAF6) of Cercocebus atys (Sooty mangabey).